Consider the following 162-residue polypeptide: Large ribosomal subunit protein uL15 (162 aa).

Residues 1–13 (MKLNEIRDNEGAT) show a composition bias toward basic and acidic residues. The interval 1–37 (MKLNEIRDNEGATKNRMRVGRGIGSGKGKTAGRGVKG) is disordered. The segment covering 21–35 (RGIGSGKGKTAGRGV) has biased composition (gly residues).

It belongs to the universal ribosomal protein uL15 family. In terms of assembly, part of the 50S ribosomal subunit.

In terms of biological role, binds to the 23S rRNA. This chain is Large ribosomal subunit protein uL15, found in Methylobacterium nodulans (strain LMG 21967 / CNCM I-2342 / ORS 2060).